Consider the following 140-residue polypeptide: Nucleoside diphosphate kinase (140 aa).

Residues K11, F59, R87, T93, R104, and N114 each contribute to the ATP site. The active-site Pros-phosphohistidine intermediate is H117.

This sequence belongs to the NDK family. In terms of assembly, homotetramer. Requires Mg(2+) as cofactor.

It localises to the cytoplasm. The enzyme catalyses a 2'-deoxyribonucleoside 5'-diphosphate + ATP = a 2'-deoxyribonucleoside 5'-triphosphate + ADP. It catalyses the reaction a ribonucleoside 5'-diphosphate + ATP = a ribonucleoside 5'-triphosphate + ADP. In terms of biological role, major role in the synthesis of nucleoside triphosphates other than ATP. The ATP gamma phosphate is transferred to the NDP beta phosphate via a ping-pong mechanism, using a phosphorylated active-site intermediate. The sequence is that of Nucleoside diphosphate kinase from Rhodospirillum rubrum (strain ATCC 11170 / ATH 1.1.1 / DSM 467 / LMG 4362 / NCIMB 8255 / S1).